Here is a 127-residue protein sequence, read N- to C-terminus: DNA-directed RNA polymerase subunit omega (127 aa).

The protein belongs to the RNA polymerase subunit omega family. The RNAP catalytic core consists of 2 alpha, 1 beta, 1 beta' and 1 omega subunit. When a sigma factor is associated with the core the holoenzyme is formed, which can initiate transcription.

It catalyses the reaction RNA(n) + a ribonucleoside 5'-triphosphate = RNA(n+1) + diphosphate. Promotes RNA polymerase assembly. Latches the N- and C-terminal regions of the beta' subunit thereby facilitating its interaction with the beta and alpha subunits. The protein is DNA-directed RNA polymerase subunit omega of Rickettsia canadensis (strain McKiel).